Here is a 334-residue protein sequence, read N- to C-terminus: Ribosomal RNA small subunit methyltransferase H (334 aa).

Residues 54–56, Asp74, Phe100, Asp121, and Gln128 each bind S-adenosyl-L-methionine; that span reads GGH. Residues 272–318 form a disordered region; the sequence is RHSKGQYPEDENLPMPPKRPRYFSKPKRVGPSKAEISNNPRSRSAWL. The span at 289-301 shows a compositional bias: basic residues; it reads KRPRYFSKPKRVG.

The protein belongs to the methyltransferase superfamily. RsmH family.

It is found in the cytoplasm. It carries out the reaction cytidine(1402) in 16S rRNA + S-adenosyl-L-methionine = N(4)-methylcytidine(1402) in 16S rRNA + S-adenosyl-L-homocysteine + H(+). Functionally, specifically methylates the N4 position of cytidine in position 1402 (C1402) of 16S rRNA. The protein is Ribosomal RNA small subunit methyltransferase H of Psychrobacter arcticus (strain DSM 17307 / VKM B-2377 / 273-4).